Consider the following 562-residue polypeptide: Probable malate:quinone oxidoreductase (562 aa).

The interval 530-562 (EVPDKSATPPDPTIAPKHQHSPTHNANSEMQAL) is disordered. Positions 551-562 (PTHNANSEMQAL) are enriched in polar residues.

Belongs to the MQO family. FAD is required as a cofactor.

The enzyme catalyses (S)-malate + a quinone = a quinol + oxaloacetate. It participates in carbohydrate metabolism; tricarboxylic acid cycle; oxaloacetate from (S)-malate (quinone route): step 1/1. The protein is Probable malate:quinone oxidoreductase of Xylella fastidiosa (strain 9a5c).